Consider the following 336-residue polypeptide: F-box protein At5g50450 (336 aa).

One can recognise an F-box domain in the interval 19–70; the sequence is NNHFEDLHDDLIISILRKLATSASSPSDFLTVLSTCKRLNRLGLHPLVLSKA. Zn(2+) contacts are provided by His-263, Cys-266, Cys-279, Cys-282, Cys-288, Cys-292, His-301, and Cys-305. The MYND-type; atypical zinc-finger motif lies at 263 to 305; it reads HGGCGRPETRAHEFRRCSVCGKVNYCSRGCQALDWRAKHKVEC.

This chain is F-box protein At5g50450, found in Arabidopsis thaliana (Mouse-ear cress).